Reading from the N-terminus, the 256-residue chain is Imidazole glycerol phosphate synthase subunit HisF (256 aa).

Catalysis depends on residues Asp-11 and Asp-130.

The protein belongs to the HisA/HisF family. In terms of assembly, heterodimer of HisH and HisF.

The protein localises to the cytoplasm. The enzyme catalyses 5-[(5-phospho-1-deoxy-D-ribulos-1-ylimino)methylamino]-1-(5-phospho-beta-D-ribosyl)imidazole-4-carboxamide + L-glutamine = D-erythro-1-(imidazol-4-yl)glycerol 3-phosphate + 5-amino-1-(5-phospho-beta-D-ribosyl)imidazole-4-carboxamide + L-glutamate + H(+). The protein operates within amino-acid biosynthesis; L-histidine biosynthesis; L-histidine from 5-phospho-alpha-D-ribose 1-diphosphate: step 5/9. In terms of biological role, IGPS catalyzes the conversion of PRFAR and glutamine to IGP, AICAR and glutamate. The HisF subunit catalyzes the cyclization activity that produces IGP and AICAR from PRFAR using the ammonia provided by the HisH subunit. This is Imidazole glycerol phosphate synthase subunit HisF from Synechococcus sp. (strain CC9605).